A 187-amino-acid polypeptide reads, in one-letter code: Putative type I specificity subunit S.MpnORF289P N-terminus (187 aa).

It belongs to the type-I restriction system S methylase family. The methyltransferase is composed of M and S polypeptides.

The N-terminal section of a specificity (S) subunit of a type I methyltransferase (MTase); this subunit dictates DNA sequence specificity. The single R subunit has multiple frameshifts and is probably not expressed. This is Putative type I specificity subunit S.MpnORF289P N-terminus from Mycoplasma pneumoniae (strain ATCC 29342 / M129 / Subtype 1) (Mycoplasmoides pneumoniae).